The primary structure comprises 614 residues: UvrABC system protein C (614 aa).

The region spanning 26–104 is the GIY-YIG domain; it reads NLPGVYKMLG…IKEYRPPYNV (79 aa). In terms of domain architecture, UVR spans 215 to 250; sequence SDIHTALIEKMEASAEELDFEKAVFYRDQLSMLREV.

The protein belongs to the UvrC family. Interacts with UvrB in an incision complex.

Its subcellular location is the cytoplasm. In terms of biological role, the UvrABC repair system catalyzes the recognition and processing of DNA lesions. UvrC both incises the 5' and 3' sides of the lesion. The N-terminal half is responsible for the 3' incision and the C-terminal half is responsible for the 5' incision. This chain is UvrABC system protein C, found in Psychrobacter cryohalolentis (strain ATCC BAA-1226 / DSM 17306 / VKM B-2378 / K5).